The primary structure comprises 338 residues: Ketol-acid reductoisomerase (NADP(+)) (338 aa).

A KARI N-terminal Rossmann domain is found at 1-181; the sequence is MKVFYDKDCD…GGGKAGIIET (181 aa). NADP(+) contacts are provided by residues 24–27, arginine 47, and serine 52; that span reads YGSQ. The active site involves histidine 107. Residue glycine 133 coordinates NADP(+). The region spanning 182–327 is the KARI C-terminal knotted domain; it reads NFREETETDL…GKLRAMMPWI (146 aa). Residues aspartate 190, glutamate 194, glutamate 226, and glutamate 230 each contribute to the Mg(2+) site. Serine 251 is a substrate binding site.

The protein belongs to the ketol-acid reductoisomerase family. The cofactor is Mg(2+).

It carries out the reaction (2R)-2,3-dihydroxy-3-methylbutanoate + NADP(+) = (2S)-2-acetolactate + NADPH + H(+). It catalyses the reaction (2R,3R)-2,3-dihydroxy-3-methylpentanoate + NADP(+) = (S)-2-ethyl-2-hydroxy-3-oxobutanoate + NADPH + H(+). It participates in amino-acid biosynthesis; L-isoleucine biosynthesis; L-isoleucine from 2-oxobutanoate: step 2/4. It functions in the pathway amino-acid biosynthesis; L-valine biosynthesis; L-valine from pyruvate: step 2/4. In terms of biological role, involved in the biosynthesis of branched-chain amino acids (BCAA). Catalyzes an alkyl-migration followed by a ketol-acid reduction of (S)-2-acetolactate (S2AL) to yield (R)-2,3-dihydroxy-isovalerate. In the isomerase reaction, S2AL is rearranged via a Mg-dependent methyl migration to produce 3-hydroxy-3-methyl-2-ketobutyrate (HMKB). In the reductase reaction, this 2-ketoacid undergoes a metal-dependent reduction by NADPH to yield (R)-2,3-dihydroxy-isovalerate. In Polaromonas naphthalenivorans (strain CJ2), this protein is Ketol-acid reductoisomerase (NADP(+)).